The primary structure comprises 439 residues: Ectonucleotide pyrophosphatase/phosphodiesterase family member 7 (439 aa).

The N-terminal stretch at 1 to 21 (MGHSAVLLCVALAILPACVTG) is a signal peptide. The Extracellular segment spans residues 22–414 (APVQRQHKLL…ILRPMLRSGS (393 aa)). Residues Asp-36 and Thr-72 each contribute to the Zn(2+) site. Residues 69–75 (VTMTSPC) form a required for enzyme activity region. Catalysis depends on Thr-72, which acts as the Nucleophile. Asn-93 lines the substrate pocket. Asn-97, Asn-118, Asn-143, and Asn-165 each carry an N-linked (GlcNAc...) asparagine glycan. The Zn(2+) site is built by Asp-196, His-200, Asp-243, and His-244. N-linked (GlcNAc...) asparagine glycosylation occurs at Asn-264. His-350 contacts Zn(2+). The helical transmembrane segment at 415 to 435 (ASLLSSQHHLVALLVGILTCL) threads the bilayer. The Cytoplasmic segment spans residues 436-439 (AKVL).

The cofactor is Zn(2+). Post-translationally, N-glycosylated; required for activity and transport to the plasma membrane. Expressed in liver and small intestine.

The protein localises to the cell membrane. The catalysed reaction is a sphingomyelin + H2O = phosphocholine + an N-acylsphing-4-enine + H(+). It catalyses the reaction a 1-O-alkyl-2-acetyl-sn-glycero-3-phosphocholine + H2O = a 1-O-alkyl-2-acetyl-sn-glycerol + phosphocholine + H(+). The enzyme catalyses 1-O-octadecyl-2-acetyl-sn-glycero-3-phosphocholine + H2O = 1-O-octadecyl-2-acetyl-sn-glycerol + phosphocholine + H(+). It carries out the reaction 1-hexadecanoyl-sn-glycero-3-phosphocholine + H2O = 1-hexadecanoyl-sn-glycerol + phosphocholine + H(+). Choline-specific phosphodiesterase that hydrolyzes sphingomyelin releasing the ceramide and phosphocholine and therefore is involved in sphingomyelin digestion, ceramide formation, and fatty acid (FA) absorption in the gastrointestinal tract. Also has phospholipase C activity and can also cleave phosphocholine from palmitoyl lyso-phosphatidylcholine and platelet-activating factor (PAF) leading to its inactivation. Does not have nucleotide pyrophosphatase activity. May promote cholesterol absorption by affecting the levels of sphingomyelin derived from either diet or endogenous sources, in the intestinal lumen. The sequence is that of Ectonucleotide pyrophosphatase/phosphodiesterase family member 7 from Mus musculus (Mouse).